The chain runs to 122 residues: Holo-[acyl-carrier-protein] synthase (122 aa).

Mg(2+)-binding residues include aspartate 8 and glutamate 56.

It belongs to the P-Pant transferase superfamily. AcpS family. The cofactor is Mg(2+).

The protein resides in the cytoplasm. It catalyses the reaction apo-[ACP] + CoA = holo-[ACP] + adenosine 3',5'-bisphosphate + H(+). Transfers the 4'-phosphopantetheine moiety from coenzyme A to a Ser of acyl-carrier-protein. This chain is Holo-[acyl-carrier-protein] synthase, found in Streptomyces griseus subsp. griseus (strain JCM 4626 / CBS 651.72 / NBRC 13350 / KCC S-0626 / ISP 5235).